Here is an 873-residue protein sequence, read N- to C-terminus: Alanine--tRNA ligase (873 aa).

H559, H563, C661, and H665 together coordinate Zn(2+).

Belongs to the class-II aminoacyl-tRNA synthetase family. In terms of assembly, homotetramer. Zn(2+) is required as a cofactor.

It is found in the cytoplasm. It catalyses the reaction tRNA(Ala) + L-alanine + ATP = L-alanyl-tRNA(Ala) + AMP + diphosphate. Its function is as follows. Catalyzes the attachment of alanine to tRNA(Ala) in a two-step reaction: alanine is first activated by ATP to form Ala-AMP and then transferred to the acceptor end of tRNA(Ala). Also edits incorrectly charged Ser-tRNA(Ala) and Gly-tRNA(Ala) via its editing domain. The protein is Alanine--tRNA ligase of Wigglesworthia glossinidia brevipalpis.